Consider the following 911-residue polypeptide: Golgin IMH1 (911 aa).

2 disordered regions span residues 16 to 41 and 271 to 314; these read LAKG…SGLP and KELP…ETVD. Residues 101–280 adopt a coiled-coil conformation; that stretch reads FFQDLNNKNN…KELPKAISHQ (180 aa). The span at 286–299 shows a compositional bias: basic residues; the sequence is NRRKKNRNKGKKNK. A phosphoserine mark is found at S308 and S660. Coiled coils occupy residues 312 to 735 and 766 to 814; these read TVDN…ALKH and SKAD…KERQ. Positions 814 to 850 are disordered; that stretch reads QYSDKSGRVSRSGSIGTLANANIDSSPANNSNPTKLE. Residues 822–847 show a composition bias toward polar residues; the sequence is VSRSGSIGTLANANIDSSPANNSNPT. S827 carries the post-translational modification Phosphoserine. Phosphothreonine is present on T830. The 49-residue stretch at 861–909 folds into the GRIP domain; that stretch reads DSEKNEKIAYIKNVLLGFLEHKEQRNQLLPVISMLLQLDSTDEKRLVMS.

As to quaternary structure, forms oligomers and is present in high-molecular-mass complexes. Interacts with ARL1.

The protein resides in the cytoplasm. The protein localises to the golgi apparatus membrane. Its function is as follows. Involved in vesicular transport between an endosomal compartment and the Golgi apparatus. The sequence is that of Golgin IMH1 (IMH1) from Saccharomyces cerevisiae (strain ATCC 204508 / S288c) (Baker's yeast).